Here is a 228-residue protein sequence, read N- to C-terminus: LexA repressor (228 aa).

The H-T-H motif DNA-binding region spans 26-46; that stretch reads FDEMKEALDLRSKSGIHRLIT. Residues Ser149 and Lys187 each act as for autocatalytic cleavage activity in the active site.

The protein belongs to the peptidase S24 family. As to quaternary structure, homodimer.

The enzyme catalyses Hydrolysis of Ala-|-Gly bond in repressor LexA.. Its function is as follows. Represses a number of genes involved in the response to DNA damage (SOS response), including recA and lexA. In the presence of single-stranded DNA, RecA interacts with LexA causing an autocatalytic cleavage which disrupts the DNA-binding part of LexA, leading to derepression of the SOS regulon and eventually DNA repair. The chain is LexA repressor from Jannaschia sp. (strain CCS1).